The sequence spans 1819 residues: MASSLAAQLSQIAAKSTNQLDLKAQRLSHSQSLIFDRKVAGTQDFDTVYQICFEGFQELCQLDARFNSFERTIFSEQSKTEDRTQLSAAQNKELDVVLEAFLALVGGRLLLSPAVKAVDWLIRRFRVHEYNTEFTILTFLPYYTTPLFLNLLSILPEDLTPTFKILIPYKKGLLNPPRHPLVHSATTNRAFLAAVNNYVLTVSRQQAHHHALLAFWAGIITEAVAGMLDSSRSGRREVEKQKHEDIILRILPILNDGFALKNVSELVIGCYMVSVVLAQKSSLQDKLLDGLMEAVAGSWTEETLESGLVCLAVLAQQKPETRLPRRALKAILRLDDIVKRLTDISSQYQTSNLLLGVVAGCVDDLTKHKDTARLELLPRVFQTQLLGELETSKAMAMVLHAASNAHRDGTMSLDTQACLADLVQEFNQSEFLQPIFQKTIAESTFDTAAIEHNLQTVIVTAPAPRAVEDVVMGDAEKVVEQDGFSSTLEALVGEKLFKSSFLSAQSIPVFDRLVQAFALAASSEEKTQVFSDLAVLGKSEVSKSPQYLSFFIRVFSGPYPIGTRAMALNIVATFLTSTSNLDLDFQAILPFLLVALADPSERIRREAAAALAAIGGIYKKHKKGENVWGRDTIYGQEKQSKSVQWLPTRDAQKVFERAVLPSLEECIFDPGHISKVLETTLRGASVDPNASELKKPLRLSFFTFLCSHAIQLPLFTPKLGLLGLLNRIDKAGGTTRTKELEPLLKAWRGLSEQEVSDICEKQRVPVSEVESQMVTIVTPKEKDALTLLLSNVSPYSESLRSTFVAAIFARVKDIWARVSEDRQVLAAEQLFDIALGLSDSALVNNCRNLLRSVELPGSVLIEFLEKIPVSLTDMEAVGPAPKRRRTSQSNMIAMTVKDEAEFGKVMEKMTFILELVDSSSPETHPELADGLFQTLAALHHFKSQIQSGMSYLLSLTLGSLLAIVNRSKESAKAQFDTSVIRADLVVDCVRTTESPQVQNAALLLVSGLSVIAPELVLHSVMPIFTFMGSSVLRKDDEYSVSVIDQTIDQVVPALIQSLRNQKRDVVSGTSELLLSFTAAFEHIPSHRRLRLFHALITKLGTQDFLFAVLAMLANRYAMDKDVLVLMTGLVSDASAPVELTVRRVHFYCGDSFLTKLQTYYKYLDLVTDSLKAKPSISQVLLGIGSDDGREPQKVAVDLLRDLAYLFKHSSLKVKMAKAFASEDEEVIGQIRALFSRILEQVLTIGDSVQSMKLVGQANSDVLGALFGTLTLVDFLDTIEVLLQRPSDELRRKVLRLLEGRLRQNPERDGASQIRVLDFLPTLVDIVRSSPDILLKHAAVACIDRIAEKYGKKDPSRVVSAAQVVASEACIGQEDDRIRIMGVLCLASMADVLGQAMIPALPEALSRSLALLEVSLEKGKENSRLHDATFSLFSALFVHIPYMISGPILDQILLLSFKSANAEDCEDDGRQEALRMMARKVDMAATLGAVDRNWQYAVQAGPAAAKETLEVVSLAIEKHPKSATGKNIGVLTSILFKVFDLRREQLALGSKATFEMADIEEIEESVNDVTIKMIYKLNDSTFRPIFTKLQDWAIAGLPKKDTQGSLARLTTFYKFLQVFFGTLQSIVTGYASYIIESVVSILGKASPSDKNTKSLWLATMRLLRSAFEHDQDEFWQSPSHLTQISKPLISQLAHATNSSTAALVIAEAVPTITELAIAADSTDNHKDLNTLLMRFLRPSSGPTGNRVAGGENPHTRLAALKAEQSLTEQLGEEWLALLPEMLPYISELMEDEDENVEREVRKWVKQIENVLGEKLDDMLT.

An HEAT 1 repeat occupies 583-620 (LDFQAILPFLLVALADPSERIRREAAAALAAIGGIYKK). Helical transmembrane passes span 945 to 965 (IQSG…AIVN) and 1001 to 1021 (ALLL…HSVM). HEAT repeat units follow at residues 1045–1082 (QTID…AFEH), 1269–1306 (LTLV…QNPE), 1313–1351 (IRVL…KYGK), and 1775–1812 (ALLP…VLGE).

Belongs to the HEATR1/UTP10 family. As to quaternary structure, component of the ribosomal small subunit (SSU) processome.

The protein resides in the nucleus. It localises to the nucleolus. The protein localises to the membrane. Involved in nucleolar processing of pre-18S ribosomal RNA. Involved in ribosome biosynthesis. This chain is U3 small nucleolar RNA-associated protein 10, found in Aspergillus clavatus (strain ATCC 1007 / CBS 513.65 / DSM 816 / NCTC 3887 / NRRL 1 / QM 1276 / 107).